The primary structure comprises 593 residues: Arylsulfatase D (593 aa).

Residues 1–33 form the signal peptide; it reads MRSAARRGRAAPAARDSLPVLLFLCLLLKTCEP. 2 residues coordinate Ca(2+): aspartate 49 and aspartate 50. An N-linked (GlcNAc...) asparagine glycan is attached at asparagine 61. Cysteine 89 contacts Ca(2+). Cysteine 89 functions as the Nucleophile in the catalytic mechanism. Cysteine 89 carries the 3-oxoalanine (Cys) modification. An N-linked (GlcNAc...) asparagine glycan is attached at asparagine 128. Lysine 148 serves as a coordination point for substrate. The active site involves histidine 150. Histidine 304 lines the substrate pocket. Residue asparagine 347 is glycosylated (N-linked (GlcNAc...) asparagine). Residues aspartate 356 and histidine 357 each coordinate Ca(2+). Lysine 381 lines the substrate pocket.

The protein belongs to the sulfatase family. Ca(2+) is required as a cofactor. The conversion to 3-oxoalanine (also known as C-formylglycine, FGly), of a serine or cysteine residue in prokaryotes and of a cysteine residue in eukaryotes, is critical for catalytic activity. In terms of tissue distribution, expressed in the pancreas, kidney, liver, lung, placenta, brain and heart.

It is found in the lysosome. This is Arylsulfatase D (ARSD) from Homo sapiens (Human).